The following is a 430-amino-acid chain: tRNA(Ile)-lysidine synthase (430 aa).

ATP is bound at residue 27–32; sequence SGGSDS.

It belongs to the tRNA(Ile)-lysidine synthase family.

Its subcellular location is the cytoplasm. It carries out the reaction cytidine(34) in tRNA(Ile2) + L-lysine + ATP = lysidine(34) in tRNA(Ile2) + AMP + diphosphate + H(+). Functionally, ligates lysine onto the cytidine present at position 34 of the AUA codon-specific tRNA(Ile) that contains the anticodon CAU, in an ATP-dependent manner. Cytidine is converted to lysidine, thus changing the amino acid specificity of the tRNA from methionine to isoleucine. This Rickettsia akari (strain Hartford) protein is tRNA(Ile)-lysidine synthase.